The sequence spans 961 residues: Endochitinase A (961 aa).

A signal peptide spans 1–21 (MAPKLFTFVSALSGLASLASA). One can recognise a GH18 domain in the interval 28 to 339 (SNIAVYYGQG…EKIREILYDL (312 aa)). Glu175 functions as the Proton donor in the catalytic mechanism. Disordered stretches follow at residues 338-720 (DLDP…TTTE), 767-787 (TDVP…TADI), 813-842 (PPAT…GEVS), and 912-933 (HVPV…ASPT). Over residues 342–355 (NHPPPTTSPTPTPT) the composition is skewed to pro residues. 4 stretches are compositionally biased toward low complexity: residues 356-510 (PSTT…STSS), 519-544 (SSTS…PVIS), 552-604 (TSSS…PETT), and 612-635 (TPGS…PATS). Polar residues predominate over residues 636–665 (GGHTETSTVSTSSANQTPSASTSKPLIPTN). Over residues 666–720 (SASSTSTGSVTSTPSAPGVPSSSAGSDETATTSTTDSEPTSTSSGSVTAKPTTTE) the composition is skewed to low complexity. A lipid anchor (GPI-anchor amidated glycine) is attached at Gly936. The propeptide at 937–961 (AGSRYDVVKGVPALVALALSLLAVL) is removed in mature form.

This sequence belongs to the glycosyl hydrolase 18 family. Chitinase class III subfamily. Post-translationally, O-glycosylated but not N-glycosylated.

Its subcellular location is the cell membrane. It is found in the secreted. The protein localises to the cell wall. It localises to the cell tip. It catalyses the reaction Random endo-hydrolysis of N-acetyl-beta-D-glucosaminide (1-&gt;4)-beta-linkages in chitin and chitodextrins.. Functionally, GPI-anchored chitinase involved in the degradation of chitin, a component of the cell walls of fungi and exoskeletal elements of some animals (including worms and arthropods). Required to reshape the cell wall at the sites where cell wall remodeling and/or cell wall maturation actively take place such as sites of conidia formation. The chain is Endochitinase A (chiA) from Emericella nidulans (Aspergillus nidulans).